A 559-amino-acid polypeptide reads, in one-letter code: Probable inorganic carbon transporter subunit DabB1 (559 aa).

13 helical membrane passes run 4–24, 33–53, 76–96, 106–126, 173–193, 202–222, 240–260, 273–293, 310–330, 375–395, 408–428, 440–460, and 487–507; these read LQWL…LFAA, LSVA…VAYI, LSSI…VYSI, PRFF…VAAG, LVLA…PTLF, ATIM…LSAF, GPTP…GFII, VLHM…VLML, MGFM…FHLI, LPWL…LVIA, GAIV…FATH, MMIL…GHAF, and GLVF…YLAS.

The protein belongs to the inorganic carbon transporter (TC 9.A.2) DabB family. In terms of assembly, forms a complex with DabA1.

Its subcellular location is the cell inner membrane. Its function is as follows. Part of an energy-coupled inorganic carbon pump. The protein is Probable inorganic carbon transporter subunit DabB1 of Halothiobacillus neapolitanus (strain ATCC 23641 / c2) (Thiobacillus neapolitanus).